The chain runs to 698 residues: Endogenous retrovirus group K member 9 Env polyprotein (698 aa).

The interval 1–47 (MNPSEMQRKAPPRRRRHRNRAPLTHKMNKMVTSEEQMKLPSTKKAEP) is disordered. The first 89 residues, 1 to 89 (MNPSEMQRKA…ALMIVSMVVS (89 aa)), serve as a signal peptide directing secretion. Residues 10–20 (APPRRRRHRNR) show a composition bias toward basic residues. The Extracellular portion of the chain corresponds to 90–631 (LPMPAGAAAA…NLNPVTWVKT (542 aa)). N-linked (GlcNAc...) asparagine glycans are attached at residues Asn100, Asn128, Asn153, Asn273, Asn354, Asn371, and Asn460. Residues 465–485 (FIFTLIAVIMGLIAVTATAAV) form a fusion peptide region. N-linked (GlcNAc...) asparagine glycosylation is found at Asn506, Asn553, Asn565, and Asn584. A helical transmembrane segment spans residues 632 to 652 (IGSTTIINLILILVCLFCLLL). The Cytoplasmic segment spans residues 653-698 (VCRCTQQLRRDSDHRERAMMTMAVLSKRKGGNVGKSKRDQIVTVSV).

The protein belongs to the beta type-B retroviral envelope protein family. HERV class-II K(HML-2) env subfamily. In terms of assembly, the surface (SU) and transmembrane (TM) proteins form a heterodimer. SU and TM are attached by noncovalent interactions or by a labile interchain disulfide bond. Post-translationally, specific enzymatic cleavages in vivo yield the mature SU and TM proteins.

It is found in the cell membrane. The protein resides in the virion. Its function is as follows. Retroviral envelope proteins mediate receptor recognition and membrane fusion during early infection. Endogenous envelope proteins may have kept, lost or modified their original function during evolution. This endogenous envelope protein has lost its original fusogenic properties. In terms of biological role, SU mediates receptor recognition. TM anchors the envelope heterodimer to the viral membrane through one transmembrane domain. The other hydrophobic domain, called fusion peptide, mediates fusion of the viral membrane with the target cell membrane. The sequence is that of Endogenous retrovirus group K member 9 Env polyprotein (ERVK-9) from Homo sapiens (Human).